Reading from the N-terminus, the 541-residue chain is Chaperonin GroEL (541 aa).

ATP contacts are provided by residues 29 to 32 (TLGP), 86 to 90 (DGTTT), G413, 478 to 480 (DAL), and D494.

The protein belongs to the chaperonin (HSP60) family. Forms a cylinder of 14 subunits composed of two heptameric rings stacked back-to-back. Interacts with the co-chaperonin GroES.

The protein localises to the cytoplasm. It carries out the reaction ATP + H2O + a folded polypeptide = ADP + phosphate + an unfolded polypeptide.. Its function is as follows. Together with its co-chaperonin GroES, plays an essential role in assisting protein folding. The GroEL-GroES system forms a nano-cage that allows encapsulation of the non-native substrate proteins and provides a physical environment optimized to promote and accelerate protein folding. The protein is Chaperonin GroEL of Alkaliphilus oremlandii (strain OhILAs) (Clostridium oremlandii (strain OhILAs)).